Reading from the N-terminus, the 181-residue chain is MSELKQAAAPEQALVVGRITSVYGVKGWVKLYSHTEPMQGIFDYKHWWLKTPSGWKTVELSQGRLQGRGLVASVKGYTDRDQVKDICGMDVYIDAAELPELEEGDYYWSQLEGLRVITKEGVLLGKVSQLMETGANDVIVVRACEGSFDREERLIPYAPGTYVLNIDLEQQEMVVDWDPEF.

One can recognise a PRC barrel domain in the interval 103–181 (EGDYYWSQLE…EMVVDWDPEF (79 aa)).

This sequence belongs to the RimM family. In terms of assembly, binds ribosomal protein uS19.

It localises to the cytoplasm. Functionally, an accessory protein needed during the final step in the assembly of 30S ribosomal subunit, possibly for assembly of the head region. Essential for efficient processing of 16S rRNA. May be needed both before and after RbfA during the maturation of 16S rRNA. It has affinity for free ribosomal 30S subunits but not for 70S ribosomes. The polypeptide is Ribosome maturation factor RimM (Marinomonas sp. (strain MWYL1)).